Here is a 184-residue protein sequence, read N- to C-terminus: Ribosome-recycling factor (184 aa).

The interval 141 to 165 (DEKNGDITEDDLRSQTDDVQKATDN) is disordered.

This sequence belongs to the RRF family.

Its subcellular location is the cytoplasm. Functionally, responsible for the release of ribosomes from messenger RNA at the termination of protein biosynthesis. May increase the efficiency of translation by recycling ribosomes from one round of translation to another. The sequence is that of Ribosome-recycling factor from Staphylococcus epidermidis (strain ATCC 35984 / DSM 28319 / BCRC 17069 / CCUG 31568 / BM 3577 / RP62A).